A 557-amino-acid polypeptide reads, in one-letter code: Glucose-6-phosphate isomerase (557 aa).

Glu-361 acts as the Proton donor in catalysis. Residues His-392 and Lys-520 contribute to the active site.

It belongs to the GPI family.

The protein localises to the cytoplasm. The catalysed reaction is alpha-D-glucose 6-phosphate = beta-D-fructose 6-phosphate. It participates in carbohydrate biosynthesis; gluconeogenesis. It functions in the pathway carbohydrate degradation; glycolysis; D-glyceraldehyde 3-phosphate and glycerone phosphate from D-glucose: step 2/4. Its function is as follows. Catalyzes the reversible isomerization of glucose-6-phosphate to fructose-6-phosphate. This Acinetobacter venetianus (strain ATCC 31012 / DSM 23050 / BCRC 14357 / CCUG 45561 / CIP 110063 / KCTC 2702 / LMG 19082 / RAG-1) protein is Glucose-6-phosphate isomerase.